A 235-amino-acid polypeptide reads, in one-letter code: Phosphoribosylaminoimidazole-succinocarboxamide synthase (235 aa).

Belongs to the SAICAR synthetase family.

It catalyses the reaction 5-amino-1-(5-phospho-D-ribosyl)imidazole-4-carboxylate + L-aspartate + ATP = (2S)-2-[5-amino-1-(5-phospho-beta-D-ribosyl)imidazole-4-carboxamido]succinate + ADP + phosphate + 2 H(+). The protein operates within purine metabolism; IMP biosynthesis via de novo pathway; 5-amino-1-(5-phospho-D-ribosyl)imidazole-4-carboxamide from 5-amino-1-(5-phospho-D-ribosyl)imidazole-4-carboxylate: step 1/2. The chain is Phosphoribosylaminoimidazole-succinocarboxamide synthase from Streptococcus pneumoniae serotype 2 (strain D39 / NCTC 7466).